We begin with the raw amino-acid sequence, 316 residues long: Ribose-phosphate pyrophosphokinase (316 aa).

Residues 40–42 (DGE) and 99–100 (RQ) contribute to the ATP site. Mg(2+) is bound by residues His133 and Asp174. Lys197 is a catalytic residue. Residues Arg199, Asp223, and 227–231 (DTAGT) contribute to the D-ribose 5-phosphate site.

This sequence belongs to the ribose-phosphate pyrophosphokinase family. Class I subfamily. As to quaternary structure, homohexamer. It depends on Mg(2+) as a cofactor.

It localises to the cytoplasm. The catalysed reaction is D-ribose 5-phosphate + ATP = 5-phospho-alpha-D-ribose 1-diphosphate + AMP + H(+). Its pathway is metabolic intermediate biosynthesis; 5-phospho-alpha-D-ribose 1-diphosphate biosynthesis; 5-phospho-alpha-D-ribose 1-diphosphate from D-ribose 5-phosphate (route I): step 1/1. Involved in the biosynthesis of the central metabolite phospho-alpha-D-ribosyl-1-pyrophosphate (PRPP) via the transfer of pyrophosphoryl group from ATP to 1-hydroxyl of ribose-5-phosphate (Rib-5-P). The sequence is that of Ribose-phosphate pyrophosphokinase from Fusobacterium nucleatum subsp. nucleatum (strain ATCC 25586 / DSM 15643 / BCRC 10681 / CIP 101130 / JCM 8532 / KCTC 2640 / LMG 13131 / VPI 4355).